We begin with the raw amino-acid sequence, 550 residues long: Dihydroxy-acid dehydratase (550 aa).

D78 is a Mg(2+) binding site. C119 is a [2Fe-2S] cluster binding site. Mg(2+) contacts are provided by D120 and K121. Position 121 is an N6-carboxylysine (K121). Residue C191 participates in [2Fe-2S] cluster binding. E440 serves as a coordination point for Mg(2+). S466 serves as the catalytic Proton acceptor.

This sequence belongs to the IlvD/Edd family. As to quaternary structure, homodimer. It depends on [2Fe-2S] cluster as a cofactor. Mg(2+) serves as cofactor.

It catalyses the reaction (2R)-2,3-dihydroxy-3-methylbutanoate = 3-methyl-2-oxobutanoate + H2O. The catalysed reaction is (2R,3R)-2,3-dihydroxy-3-methylpentanoate = (S)-3-methyl-2-oxopentanoate + H2O. Its pathway is amino-acid biosynthesis; L-isoleucine biosynthesis; L-isoleucine from 2-oxobutanoate: step 3/4. It functions in the pathway amino-acid biosynthesis; L-valine biosynthesis; L-valine from pyruvate: step 3/4. Functionally, functions in the biosynthesis of branched-chain amino acids. Catalyzes the dehydration of (2R,3R)-2,3-dihydroxy-3-methylpentanoate (2,3-dihydroxy-3-methylvalerate) into 2-oxo-3-methylpentanoate (2-oxo-3-methylvalerate) and of (2R)-2,3-dihydroxy-3-methylbutanoate (2,3-dihydroxyisovalerate) into 2-oxo-3-methylbutanoate (2-oxoisovalerate), the penultimate precursor to L-isoleucine and L-valine, respectively. This chain is Dihydroxy-acid dehydratase, found in Methanococcus maripaludis (strain C6 / ATCC BAA-1332).